The primary structure comprises 284 residues: Acetylglutamate kinase (284 aa).

Substrate contacts are provided by residues 64 to 65 (GG), arginine 86, and asparagine 179.

It belongs to the acetylglutamate kinase family. ArgB subfamily.

The protein localises to the cytoplasm. The enzyme catalyses N-acetyl-L-glutamate + ATP = N-acetyl-L-glutamyl 5-phosphate + ADP. It functions in the pathway amino-acid biosynthesis; L-arginine biosynthesis; N(2)-acetyl-L-ornithine from L-glutamate: step 2/4. In terms of biological role, catalyzes the ATP-dependent phosphorylation of N-acetyl-L-glutamate. The protein is Acetylglutamate kinase of Prochlorococcus marinus subsp. pastoris (strain CCMP1986 / NIES-2087 / MED4).